Consider the following 487-residue polypeptide: Glutamyl-tRNA(Gln) amidotransferase subunit A (487 aa).

Active-site charge relay system residues include lysine 76 and serine 151. Serine 175 (acyl-ester intermediate) is an active-site residue.

The protein belongs to the amidase family. GatA subfamily. In terms of assembly, heterotrimer of A, B and C subunits.

The catalysed reaction is L-glutamyl-tRNA(Gln) + L-glutamine + ATP + H2O = L-glutaminyl-tRNA(Gln) + L-glutamate + ADP + phosphate + H(+). Allows the formation of correctly charged Gln-tRNA(Gln) through the transamidation of misacylated Glu-tRNA(Gln) in organisms which lack glutaminyl-tRNA synthetase. The reaction takes place in the presence of glutamine and ATP through an activated gamma-phospho-Glu-tRNA(Gln). This chain is Glutamyl-tRNA(Gln) amidotransferase subunit A, found in Azoarcus sp. (strain BH72).